The primary structure comprises 327 residues: NADPH-dependent aldose reductase GRE3 (327 aa).

The active-site Proton donor is the Tyr-49. His-111 is a binding site for substrate. An NADP(+)-binding site is contributed by Ser-219 to Asn-286.

This sequence belongs to the aldo/keto reductase family. In terms of assembly, monomer.

The protein resides in the cytoplasm. It localises to the nucleus. The catalysed reaction is an alditol + NAD(+) = an aldose + NADH + H(+). The enzyme catalyses an alditol + NADP(+) = an aldose + NADPH + H(+). Functionally, aldose reductase with a broad substrate specificity. Reduces the cytotoxic compound methylglyoxal (MG) to acetol and (R)-lactaldehyde under stress conditions. MG is synthesized via a bypath of glycolysis from dihydroxyacetone phosphate and is believed to play a role in cell cycle regulation and stress adaptation. In pentose-fermenting yeasts, aldose reductase catalyzes the reduction of xylose into xylitol. The purified enzyme catalyzes this reaction, but the inability of S.cerevisiae to grow on xylose as sole carbon source indicates that the physiological function is more likely methylglyoxal reduction. This Saccharomyces cerevisiae (strain ATCC 204508 / S288c) (Baker's yeast) protein is NADPH-dependent aldose reductase GRE3.